The sequence spans 346 residues: Ly6/PLAUR domain-containing protein 3 (346 aa).

An N-terminal signal peptide occupies residues 1–30 (MDPARKAGAQAMIWTAGWLLLLLLRGGAQA). UPAR/Ly6 domains are found at residues 33–126 (CYSC…ALDP) and 140–222 (CYSC…SRCN). Residues N118, N163, N176, and N183 are each glycosylated (N-linked (GlcNAc...) asparagine). The tract at residues 233–324 (PRIPPLVRLP…KGGPQQPHNK (92 aa)) is disordered. The segment covering 234–246 (RIPPLVRLPPPEP) has biased composition (pro residues). Low complexity predominate over residues 247-269 (TTVASTTSVTTSTSAPVRPTSTT). The segment covering 283 to 295 (GVEHEASRDEEPR) has biased composition (basic and acidic residues). C326 is lipidated: GPI-anchor amidated cysteine. A propeptide spans 327 to 346 (VAPTAGLAALLLAVAAGVLL) (removed in mature form).

As to quaternary structure, binds laminin-1 and laminin-5. Interacts with LGALS3. Interacts with AGR2 and AGR3. In terms of processing, N-glycosylated and O-glycosylated. As to expression, expressed in placenta, skin and urothelium. Found in suprabasal keratinocytes of chronic wounds. Weak expression is found in esophagus and peripheral blood mononuclear cells. Found in the majority of primary and metastatic transitional cell carcinomas (TCCs) and as well in breast cancer tissues, but not in adjacent normal tissues. High expression is found in the tumor component of some noninvasive superficial lesions and in invasive and metastatic urothelial cancers.

The protein localises to the cell membrane. Functionally, supports cell migration. May be involved in urothelial cell-matrix interactions. May be involved in tumor progression. The protein is Ly6/PLAUR domain-containing protein 3 (LYPD3) of Homo sapiens (Human).